We begin with the raw amino-acid sequence, 947 residues long: Protocadherin alpha-4 (947 aa).

A signal peptide spans 1–29; that stretch reads MEFSWGSGQESRRLLLLLLLLSAWEAGNG. Cadherin domains lie at 30–133, 134–242, 243–350, 351–455, 456–565, and 588–678; these read QLHY…PPVF, PATQ…APAF, DRTI…VPDL, EFKS…APAF, AQPE…APAL, and DHVV…APKA. The Extracellular segment spans residues 30–697; it reads QLHYSVSEEA…GPDAALVDVN (668 aa). Cysteine 96 and cysteine 102 are disulfide-bonded. Asparagine 139, asparagine 257, and asparagine 265 each carry an N-linked (GlcNAc...) asparagine glycan. N-linked (GlcNAc...) asparagine glycosylation is present at asparagine 548. Residues 698–718 traverse the membrane as a helical segment; that stretch reads VYLIIAICAVSSLLVLTLLLY. The Cytoplasmic segment spans residues 719-947; the sequence is TALRCSAPPT…GNSTTDNSDQ (229 aa). 6 PXXP repeats span residues 734 to 737, 774 to 777, 796 to 799, 829 to 832, 870 to 873, and 888 to 891; these read PGKP, PSLP, PRQP, PGGP, PGNP, and PGSP. The 6 X 4 AA repeats of P-X-X-P stretch occupies residues 734 to 891; it reads PGKPTLVCSS…PDKFIIPGSP (158 aa). The interval 738–947 is required for interaction with FYN; it reads TLVCSSAVGS…GNSTTDNSDQ (210 aa). Disordered stretches follow at residues 754–805 and 828–853; these read RRPR…DWRY and GPGG…EVSP. The tract at residues 892 to 947 is disordered; it reads AIISIRQEPANSQIDKSDFITFGKKEETKKKKKKKKGNKTQEKKEKGNSTTDNSDQ. A compositionally biased stretch (basic and acidic residues) spans 906 to 920; it reads DKSDFITFGKKEETK.

Forms homodimers in trans (molecules expressed by two different cells). Forms promiscuous heterodimers in cis (at the plasma membrane of the same cell) with other protocadherins. Interacts with FYN.

The protein resides in the cell membrane. Functionally, calcium-dependent cell-adhesion protein involved in cells self-recognition and non-self discrimination. Thereby, it is involved in the establishment and maintenance of specific neuronal connections in the brain. This is Protocadherin alpha-4 from Pan troglodytes (Chimpanzee).